Consider the following 664-residue polypeptide: RBBP8 N-terminal-like protein (664 aa).

The span at 125 to 140 shows a compositional bias: basic and acidic residues; it reads LRGLGDRPKPRAKEGT. Disordered regions lie at residues 125-284 and 369-664; these read LRGL…KLSP and RAGS…WEET. Pro residues predominate over residues 241–255; that stretch reads GTPPPLPARSSPPSP. The segment covering 437-454 has biased composition (basic and acidic residues); the sequence is ALDKPLDLSEWGRARGQD. Polar residues predominate over residues 481-496; the sequence is SGPLTRSPQALSNGTK. Residues 516-528 show a composition bias toward low complexity; that stretch reads LPGSQLSLSSPGS. Over residues 537-552 the composition is skewed to pro residues; that stretch reads PLPPPHPQPPPHPQPP. Basic and acidic residues predominate over residues 554–570; the sequence is LDGHPEPSKAEVLRPES. The span at 584–597 shows a compositional bias: polar residues; the sequence is GLSSQAEATTSTTG. Residues 628–637 are compositionally biased toward basic residues; that stretch reads KKPSRGRRKL. A compositionally biased stretch (polar residues) spans 654 to 664; the sequence is PSPNSSPWEET.

The protein is RBBP8 N-terminal-like protein (RBBP8NL) of Homo sapiens (Human).